A 495-amino-acid chain; its full sequence is Sugar phosphate exchanger 3 (495 aa).

Residues 16 to 36 (FSHHHMVVFLLTFFSYSLLHA) form a helical membrane-spanning segment. N58 carries N-linked (GlcNAc...) asparagine glycosylation. 5 helical membrane passes run 82 to 102 (TLFLGMLDTIFLFSYAVGLFI), 114 to 134 (WVLSFGMCSSALVVFVFGTLT), 148 to 168 (LWIVNGLLQSTGWPCVVAVMG), 178 to 198 (VVFGLWSACASVGNILGACLA), and 210 to 230 (FLVTAAVQFAGGIIIFFGLLV). Residue N267 is glycosylated (N-linked (GlcNAc...) asparagine). The next 6 membrane-spanning stretches (helical) occupy residues 298-318 (LAYACLKLVNYSFFFWLPFYL), 334-354 (IWYDVGGIIGGTLQGFISDML), 358-378 (APVLALSLLLAIGSLVGYSRS), 387-407 (LLMAVTGFFIGGPSNMISSAI), 429-449 (GIVDGTGSIGAAVGQYLVSLI), and 453-473 (LGWMWVFYFFILMTSCTVLFI).

The protein belongs to the major facilitator superfamily. Organophosphate:Pi antiporter (OPA) (TC 2.A.1.4) family. Interacts with ATRAID; the interaction is direct and both proteins are mutually dependent for their stability. Post-translationally, glycosylated.

The protein resides in the endoplasmic reticulum membrane. The protein localises to the lysosome membrane. In terms of biological role, unlike the other SLC37 members, lacks glucose-6-phosphate antiporter activity. In osteoclasts, forms a transporter complex with ATRAID for nitrogen-containing-bisphophonates (N-BPs) required for releasing N-BP molecules that have trafficked to lysosomes through fluid-phase endocytosis into the cytosol. The protein is Sugar phosphate exchanger 3 (SLC37A3) of Bos taurus (Bovine).